We begin with the raw amino-acid sequence, 483 residues long: Regulatory protein ViaA (483 aa).

The protein belongs to the ViaA family. Homodimer. Interacts with RavA.

The protein localises to the cytoplasm. Component of the RavA-ViaA chaperone complex, which may act on the membrane to optimize the function of some of the respiratory chains. ViaA stimulates the ATPase activity of RavA. In Shigella flexneri, this protein is Regulatory protein ViaA.